Reading from the N-terminus, the 458-residue chain is Tubulin beta chain (458 aa).

Residues Gln-11, Glu-69, Ser-138, Gly-142, Thr-143, Gly-144, Asn-204, and Asn-226 each contribute to the GTP site. Glu-69 contributes to the Mg(2+) binding site. The disordered stretch occupies residues 426–458 (EAATVEGEEEEDEYAEGGVVNGDQSYDEPYQAA). The span at 431–440 (EGEEEEDEYA) shows a compositional bias: acidic residues.

Belongs to the tubulin family. In terms of assembly, dimer of alpha and beta chains. A typical microtubule is a hollow water-filled tube with an outer diameter of 25 nm and an inner diameter of 15 nM. Alpha-beta heterodimers associate head-to-tail to form protofilaments running lengthwise along the microtubule wall with the beta-tubulin subunit facing the microtubule plus end conferring a structural polarity. Microtubules usually have 13 protofilaments but different protofilament numbers can be found in some organisms and specialized cells. Mg(2+) is required as a cofactor.

The protein resides in the cytoplasm. It localises to the cytoskeleton. Its function is as follows. Tubulin is the major constituent of microtubules, a cylinder consisting of laterally associated linear protofilaments composed of alpha- and beta-tubulin heterodimers. Microtubules grow by the addition of GTP-tubulin dimers to the microtubule end, where a stabilizing cap forms. Below the cap, tubulin dimers are in GDP-bound state, owing to GTPase activity of alpha-tubulin. The chain is Tubulin beta chain (TUBB1) from Pyropia yezoensis (Susabi-nori).